The following is an 85-amino-acid chain: Small proline-rich protein 2D (85 aa).

The span at M1–P11 shows a compositional bias: low complexity. The segment at M1–P20 is disordered. A run of 4 repeats spans residues K21–P29, L30–P38, P39–P47, and P48–E56. The interval K21 to E56 is 4 X 9 AA approximate tandem repeats. The interval P57–K85 is disordered.

Belongs to the cornifin (SPRR) family. In terms of tissue distribution, expressed in uterus.

It is found in the cytoplasm. In terms of biological role, cross-linked envelope protein of keratinocytes. It is a keratinocyte protein that first appears in the cell cytosol, but ultimately becomes cross-linked to membrane proteins by transglutaminase. All that results in the formation of an insoluble envelope beneath the plasma membrane. This chain is Small proline-rich protein 2D (Sprr2d), found in Mus musculus (Mouse).